We begin with the raw amino-acid sequence, 75 residues long: Nigwaprin-a (75 aa).

The first 24 residues, 1 to 24, serve as a signal peptide directing secretion; it reads MSSGGLLLLLGLLTLWAELTPVSG. One can recognise a WAP domain in the interval 27-72; the sequence is RPVKPGLCPPRPQKPPCVKECKNDWSCRGEQKCCRYGCIYECRDPI. 4 cysteine pairs are disulfide-bonded: C34-C60, C43-C64, C47-C59, and C53-C68.

It belongs to the venom waprin family. As to expression, expressed by the venom gland.

The protein localises to the secreted. Damages membranes of susceptible bacteria. Has no hemolytic activity. Not toxic to mice. Does not inhibit the proteinases elastase and cathepsin G. The polypeptide is Nigwaprin-a (Cryptophis nigrescens (Eastern small-eyed snake)).